The sequence spans 534 residues: Calcium uptake protein 1 homolog, mitochondrial (534 aa).

The N-terminal 32 residues, 1-32 (MLHCSFLRVIPIKNASKRLIIVRSLTSAPAKT), are a transit peptide targeting the mitochondrion. The disordered stretch occupies residues 131–150 (PEASQKEEVTESNGEVEEVK). EF-hand domains follow at residues 271 to 306 (TSHA…IMSQ), 338 to 359 (KDGK…LQHD), and 466 to 501 (LSDH…RMRR). 4 residues coordinate Ca(2+): aspartate 284, aspartate 286, asparagine 288, and glutamate 295.

The protein belongs to the MICU1 family. MICU1 subfamily. In terms of tissue distribution, expressed at low levels in PLM touch receptor neurons, germ cells, epidermis, and muscles.

Its subcellular location is the mitochondrion intermembrane space. The protein localises to the mitochondrion inner membrane. Calcium sensor of the mitochondrial calcium uniporter (mcu-1) channel, which senses calcium level via its EF-hand domains. At low calcium levels, micu-1 occludes the pore of the mcu-1 channel, preventing mitochondrial calcium uptake. At higher calcium levels, calcium-binding to micu-1 induces a conformational change that weakens mcu-1-micu-1 interactions and moves micu-1 away from the pore, allowing calcium permeation through the mcu-1 channel. Also required to protect against manganese toxicity by preventing manganese uptake by mcu-1. Modulates the activity of the mitochondrial calcium uniporter protein mcu-1 depending on the level of intracellular calcium in PLM touch receptor neurons following axonal injury. This chain is Calcium uptake protein 1 homolog, mitochondrial, found in Caenorhabditis elegans.